We begin with the raw amino-acid sequence, 412 residues long: Peptidase T (412 aa).

His-84 contributes to the Zn(2+) binding site. The active site involves Asp-86. Asp-146 lines the Zn(2+) pocket. Residue Glu-179 is the Proton acceptor of the active site. 3 residues coordinate Zn(2+): Glu-180, Asp-202, and His-385.

Belongs to the peptidase M20B family. Zn(2+) is required as a cofactor.

The protein localises to the cytoplasm. It carries out the reaction Release of the N-terminal residue from a tripeptide.. Its function is as follows. Cleaves the N-terminal amino acid of tripeptides. The chain is Peptidase T from Haemophilus influenzae (strain 86-028NP).